A 415-amino-acid chain; its full sequence is MNIVEMLCTDVIVYMMDYLSDIDKINFLKTCSSFYNHRFCVKFNDFHSFDKIRDLDYSENFKRIVFTKTKNNVKSFTLNNSYDRIPIDAKHLIIGKLFKLSLENIIPRGITHLTIEEEYGSEINPGIINPEEIPDIVTYLNIKSRNIFIKKGAIPDSVTHLYFGSDYLSKDIIPKNVVYLRFGDFSRCVIGQRLVETRQVNDITVTTTRIESYIPESVACLHLGFSMSNKCLGERIIETQEMDGEKINTTKIVSYIPKNVTCLTIFNEVYKNTFDFIPKNVTKLNLFGEIMEMIDETIIPKNITTLGLACYRDLNKIKIPKKVTRLNFLFEEYMSNPKVLDIPEHITTISLKYTHDIFKKVVFNNILNLKIDSYYFEKKLYLPNSIKTLTIYGNYDKKVIKKLPNTINTLIFKHK.

One copy of the FNIP repeat lies at 148-185 (FIKKGAIPDSVTHLYFGSDYLSKDIIPKNVVYLRFGDF).

This chain is Putative FNIP repeat-containing protein L415, found in Acanthamoeba polyphaga mimivirus (APMV).